The following is a 394-amino-acid chain: Phosphopentomutase (394 aa).

The Mn(2+) site is built by Asp15, Asp288, His293, Asp329, His330, and His341.

Belongs to the phosphopentomutase family. Mn(2+) is required as a cofactor.

The protein resides in the cytoplasm. The catalysed reaction is 2-deoxy-alpha-D-ribose 1-phosphate = 2-deoxy-D-ribose 5-phosphate. It carries out the reaction alpha-D-ribose 1-phosphate = D-ribose 5-phosphate. It functions in the pathway carbohydrate degradation; 2-deoxy-D-ribose 1-phosphate degradation; D-glyceraldehyde 3-phosphate and acetaldehyde from 2-deoxy-alpha-D-ribose 1-phosphate: step 1/2. In terms of biological role, isomerase that catalyzes the conversion of deoxy-ribose 1-phosphate (dRib-1-P) and ribose 1-phosphate (Rib-1-P) to deoxy-ribose 5-phosphate (dRib-5-P) and ribose 5-phosphate (Rib-5-P), respectively. The chain is Phosphopentomutase (drm) from Bacillus subtilis (strain 168).